Here is a 140-residue protein sequence, read N- to C-terminus: Large ribosomal subunit protein uL16 (140 aa).

Belongs to the universal ribosomal protein uL16 family. As to quaternary structure, part of the 50S ribosomal subunit.

Its function is as follows. Binds 23S rRNA and is also seen to make contacts with the A and possibly P site tRNAs. The protein is Large ribosomal subunit protein uL16 of Trichlorobacter lovleyi (strain ATCC BAA-1151 / DSM 17278 / SZ) (Geobacter lovleyi).